The following is an 89-amino-acid chain: Large ribosomal subunit protein uL23c (89 aa).

Belongs to the universal ribosomal protein uL23 family. Part of the 50S ribosomal subunit.

Its subcellular location is the plastid. It localises to the chloroplast. Its function is as follows. Binds to 23S rRNA. The sequence is that of Large ribosomal subunit protein uL23c (rpl23) from Zygnema circumcarinatum (Green alga).